The following is a 618-amino-acid chain: Polyamine transporter TPO5 (618 aa).

Over 1 to 60 (MPEYTLLADNIRENIVHFDPNGLFDNLHTIVHEDDSQENEEAEHFNYDQVLDKSLLSRGS) the chain is Cytoplasmic. The helical transmembrane segment at 61–84 (IVGLGLGLMSPVLGMCTSMAIGLI) threads the bilayer. Residues 85 to 90 (NGGPLT) lie on the Extracellular side of the membrane. The chain crosses the membrane as a helical span at residues 91–110 (IMLGFLISGVCIWFSSLSLG). Residues 111–131 (EIVSKFPMELHVGSAMLAPEK) are Cytoplasmic-facing. Residues 132–148 (LKLVCSWYTGWLMLIGN) form a helical membrane-spanning segment. Residues 149–154 (WTMSTS) lie on the Extracellular side of the membrane. A helical transmembrane segment spans residues 155-171 (ITFAGAQLTISLILMTN). The Cytoplasmic portion of the chain corresponds to 172 to 179 (SNLISEAH). A helical membrane pass occupies residues 180-200 (LIFYTVIVFYLVVTVVGLVNL). The Extracellular portion of the chain corresponds to 201–211 (KFARFIETINK). A helical transmembrane segment spans residues 212–231 (VCVYWIIYAIIFIDILLLVF). The Cytoplasmic portion of the chain corresponds to 232-297 (HKGKFRSLKY…EKDIPRGMSN (66 aa)). Residues 298-317 (AVLLSAFSGVIFLIPIMLIL) form a helical membrane-spanning segment. Topologically, residues 318–342 (PDNDLLFTNHKVLPIVNIFTKSTDS) are extracellular. The chain crosses the membrane as a helical span at residues 343–367 (VVLSFFLVLLILGNLLFSGIGSITT). Residues 368–402 (SSRAVYSFSRDQAIPYYDKWTYVEPDSQSKVPKNS) lie on the Cytoplasmic side of the membrane. Residues 403–419 (VVLSMIISYFLGLLALI) traverse the membrane as a helical segment. At 420–425 (STAAFN) the chain is on the extracellular side. A helical transmembrane segment spans residues 426–449 (AFIGAAVLCLCSATFIPLVLVLFT). Residues 450 to 464 (RRRAIRSAPVKIRYK) lie on the Cytoplasmic side of the membrane. A helical membrane pass occupies residues 465 to 486 (FGWFINIVSIVWLLLSMVSVCL). At 487–498 (PTQVPVTFKTMN) the chain is on the extracellular side. Residues 499–516 (YALMVYVFCILVITGLYF) traverse the membrane as a helical segment. At 517-618 (KWGKYNFRLP…DLADDRRYDI (102 aa)) the chain is on the cytoplasmic side. Phosphoserine is present on S569. Positions 576–618 (VHPKSSTENPFEENEENVITDYGDEHHTAEQEFDLADDRRYDI) are disordered. Basic and acidic residues predominate over residues 598-618 (GDEHHTAEQEFDLADDRRYDI).

It belongs to the amino acid-polyamine-organocation (APC) superfamily.

It localises to the golgi apparatus membrane. Functionally, required for polyamine transport. Transports putrescine effectively and spermidine less effectively. The protein is Polyamine transporter TPO5 (TPO5) of Saccharomyces cerevisiae (strain ATCC 204508 / S288c) (Baker's yeast).